We begin with the raw amino-acid sequence, 273 residues long: Bifunctional protein FolD (273 aa).

NADP(+) is bound by residues 155–157, Ser182, and Ile223; that span reads GRS.

This sequence belongs to the tetrahydrofolate dehydrogenase/cyclohydrolase family. As to quaternary structure, homodimer.

It catalyses the reaction (6R)-5,10-methylene-5,6,7,8-tetrahydrofolate + NADP(+) = (6R)-5,10-methenyltetrahydrofolate + NADPH. It carries out the reaction (6R)-5,10-methenyltetrahydrofolate + H2O = (6R)-10-formyltetrahydrofolate + H(+). Its pathway is one-carbon metabolism; tetrahydrofolate interconversion. Catalyzes the oxidation of 5,10-methylenetetrahydrofolate to 5,10-methenyltetrahydrofolate and then the hydrolysis of 5,10-methenyltetrahydrofolate to 10-formyltetrahydrofolate. The polypeptide is Bifunctional protein FolD (Pseudothermotoga lettingae (strain ATCC BAA-301 / DSM 14385 / NBRC 107922 / TMO) (Thermotoga lettingae)).